Reading from the N-terminus, the 691-residue chain is DNA ligase (691 aa).

NAD(+) contacts are provided by residues 41-45, 90-91, and Glu130; these read DAEYD and SL. The active-site N6-AMP-lysine intermediate is the Lys132. Residues Arg153, Glu190, Lys307, and Lys331 each coordinate NAD(+). Cys425, Cys428, Cys443, and Cys449 together coordinate Zn(2+). In terms of domain architecture, BRCT spans 610-691; that stretch reads APQGVLAGKT…MHTLLEGHAR (82 aa).

Belongs to the NAD-dependent DNA ligase family. LigA subfamily. Mg(2+) serves as cofactor. Requires Mn(2+) as cofactor.

The catalysed reaction is NAD(+) + (deoxyribonucleotide)n-3'-hydroxyl + 5'-phospho-(deoxyribonucleotide)m = (deoxyribonucleotide)n+m + AMP + beta-nicotinamide D-nucleotide.. DNA ligase that catalyzes the formation of phosphodiester linkages between 5'-phosphoryl and 3'-hydroxyl groups in double-stranded DNA using NAD as a coenzyme and as the energy source for the reaction. It is essential for DNA replication and repair of damaged DNA. This is DNA ligase from Burkholderia pseudomallei (strain 668).